Here is a 380-residue protein sequence, read N- to C-terminus: 12-oxophytodienoate reductase 1 (380 aa).

FMN-binding positions include 35–37, A68, and Q110; that span reads PLT. Residue 182–185 participates in substrate binding; the sequence is HGAH. Y187 serves as the catalytic Proton donor. R234 serves as a coordination point for FMN. R275 contributes to the substrate binding site. FMN-binding positions include G305 and 326–327; that span reads GR.

The protein belongs to the NADH:flavin oxidoreductase/NADH oxidase family. It depends on FMN as a cofactor.

It catalyses the reaction (1S,2S)-OPC-8 + NADP(+) = (9S,13S,15Z)-12-oxophyto-10,15-dienoate + NADPH + H(+). It functions in the pathway lipid metabolism; oxylipin biosynthesis. Functionally, probably involved in the biosynthesis or metabolism of oxylipin signaling molecules. In vitro, reduces cis(-)-12-oxophytodienoic acid (cis(-)-OPDA) and to cis(-)-OPC-8:0. The protein is 12-oxophytodienoate reductase 1 of Oryza sativa subsp. japonica (Rice).